Here is a 500-residue protein sequence, read N- to C-terminus: Glycerol kinase (500 aa).

Threonine 16 contributes to the ADP binding site. Residues threonine 16 and threonine 17 each contribute to the ATP site. Sn-glycerol 3-phosphate is bound at residue threonine 16. An ADP-binding site is contributed by arginine 20. Residues arginine 86, glutamate 87, tyrosine 138, and aspartate 247 each coordinate sn-glycerol 3-phosphate. 5 residues coordinate glycerol: arginine 86, glutamate 87, tyrosine 138, aspartate 247, and glutamine 248. Positions 269 and 312 each coordinate ADP. Positions 269, 312, 316, and 413 each coordinate ATP. Positions 413 and 417 each coordinate ADP.

Belongs to the FGGY kinase family.

The catalysed reaction is glycerol + ATP = sn-glycerol 3-phosphate + ADP + H(+). The protein operates within polyol metabolism; glycerol degradation via glycerol kinase pathway; sn-glycerol 3-phosphate from glycerol: step 1/1. With respect to regulation, inhibited by fructose 1,6-bisphosphate (FBP). Its function is as follows. Key enzyme in the regulation of glycerol uptake and metabolism. Catalyzes the phosphorylation of glycerol to yield sn-glycerol 3-phosphate. The sequence is that of Glycerol kinase from Rippkaea orientalis (strain PCC 8801 / RF-1) (Cyanothece sp. (strain PCC 8801)).